Here is a 75-residue protein sequence, read N- to C-terminus: Protein SlyX homolog (75 aa).

This sequence belongs to the SlyX family.

The polypeptide is Protein SlyX homolog (Vibrio atlanticus (strain LGP32) (Vibrio splendidus (strain Mel32))).